A 242-amino-acid chain; its full sequence is MSAHALPKADLTATSLIVSGGIIAAWLALHVHALWFLDAAAHPILAIANFLGLTWLSVGLFIIAHDAMHGSVVPGRPRANAAMGQLVLWLYAGFSWRKMIVKHMAHHRHAGTDDDPDFDHGGPVRWYARFIGTYFGWREGLLLPVIVTVYALILGDRWMYVVFWPLPSILASIQLFVFGTWLPHRPGHDAFPDRHNARSSRISDPVSLLTCFHFGGYHHEHHLHPTVPWWRLPSTRTKGDTA.

The catalysed reaction is all-trans-beta-carotene + 2 AH2 + 2 O2 = echinenone + 2 A + 3 H2O. It catalyses the reaction echinenone + 2 AH2 + 2 O2 = canthaxanthin + 2 A + 3 H2O. It functions in the pathway carotenoid biosynthesis; astaxanthin biosynthesis. Its function is as follows. Converts beta-carotene to canthaxanthin via echinenone. This chain is Beta-carotene ketolase (crtW), found in Paracoccus sp. (strain N81106 / MBIC 01143) (Agrobacterium aurantiacum).